We begin with the raw amino-acid sequence, 2527 residues long: Neurogenic locus notch homolog protein 1 (2527 aa).

The first 36 residues, 1-36 (MGRSDSRAGALLEGGCEQNIDPRRAAHCHHPRLATS), serve as a signal peptide directing secretion. The Extracellular portion of the chain corresponds to 37-1741 (SLRCSQPSGT…VEPPLPSQLH (1705 aa)). Intrachain disulfides connect C40–C53, C47–C62, C64–C73, C79–C90, C84–C103, C105–C114, C122–C133, C127–C143, C145–C154, C160–C171, C165–C180, C182–C191, C198–C211, C205–C220, C222–C231, C238–C249, C243–C259, C261–C270, C277–C288, C282–C297, C299–C308, C315–C328, C322–C337, C339–C348, C355–C366, C360–C375, C377–C386, C392–C403, C397–C414, C416–C425, C432–C445, C439–C454, and C456–C465. A glycan (N-linked (GlcNAc...) asparagine) is linked at N57. EGF-like domains follow at residues 75 to 115 (DPNP…PLCL), 118 to 155 (LDNA…KSCQ), and 156 to 192 (QADP…PTCR). O-linked (Glc...) serine glycosylation occurs at S81. A glycan (O-linked (Fuc...) threonine) is linked at T89. O-linked (Fuc...) threonine glycosylation is present at T132. S162 carries O-linked (Glc...) serine glycosylation. In terms of domain architecture, EGF-like 4; calcium-binding spans 194–232 (DVNECSQNPGLCRHGGTCHNEIGSYRCVCRATHTGPHCE). An O-linked (Fuc...) threonine glycan is attached at T210. An EGF-like 5 domain is found at 234-271 (PYVPCSPSPCQNGGTCRPTGDTTHECACLPGFAGQNCE). A glycan (O-linked (Fuc...) threonine; alternate) is linked at T248. O-linked (GalNAc...) threonine; alternate glycosylation is present at T248. Positions 273–309 (NVDDCPGNNCKNGGACVDGVNTYNCRCPPEWTGQYCT) constitute an EGF-like 6; calcium-binding domain. Residues 311–349 (DVDECQLMPNACQNGGTCHNTHGGYNCVCVNGWTGEDCS) enclose the EGF-like 7; calcium-binding domain. O-linked (Fuc...) threonine glycosylation is present at T327. In terms of domain architecture, EGF-like 8; calcium-binding spans 351–387 (NIDDCASAACFQGATCHDRVASFYCECPHGRTGLLCH). A glycan (O-linked (Glc...) serine) is linked at S357. O-linked (Fuc...) threonine glycosylation occurs at T365. In terms of domain architecture, EGF-like 9 spans 388 to 426 (LNDACISNPCNEGSNCDTNPVNGKAICTCPSGYTGPACS). O-linked (Glc...) serine glycosylation occurs at S394. Residues 428–466 (DVDECALGANPCEHAGKCLNTLGSFECQCLQGYTGPRCE) form the EGF-like 10; calcium-binding domain. The interval 436 to 437 (AN) is interaction with DLL4. The Ca(2+) site is built by T448 and S451. O-linked (Glc...) serine glycosylation is present at S451. Positions 464 to 468 (RCEID) are interaction with DLL4. The Ca(2+) site is built by D468, V469, and E471. The EGF-like 11; calcium-binding domain maps to 468-504 (DVNECISNPCQNDATCLDQIGEFQCICMPGYEGVYCE). Intrachain disulfides connect C472/C483, C477/C492, and C494/C503. S474 carries an O-linked (Glc...) serine glycan. An O-linked (Fuc...) threonine glycan is attached at T482. Ca(2+) is bound by residues D485 and Q486. Residues N506, T507, and E509 each coordinate Ca(2+). Positions 506–542 (NTDECASSPCLHNGHCMDKINEFLCQCPKGFSGHLCQ) constitute an EGF-like 12; calcium-binding domain. 28 disulfide bridges follow: C510–C521, C515–C530, C532–C541, C548–C559, C553–C568, C570–C579, C586–C596, C591–C605, C607–C616, C623–C634, C628–C643, C645–C654, C661–C671, C666–C680, C682–C691, C698–C709, C703–C718, C720–C729, C736–C746, C741–C755, C757–C766, C773–C784, C778–C793, C795–C804, C811–C822, C816–C831, C833–C842, and C849–C860. A glycan (O-linked (Glc...) serine) is linked at S512. Positions 523 and 524 each coordinate Ca(2+). The EGF-like 13; calcium-binding domain maps to 544-580 (DVDECASTPCKNGAKCLDGPNTYTCVCTEGYTGTHCE). S550 carries an O-linked (Glc...) serine glycan. One can recognise an EGF-like 14; calcium-binding domain in the interval 582–617 (DIDECDPDPCHYGFCKDGVATFTCLCQPGYTGHHCE). In terms of domain architecture, EGF-like 15; calcium-binding spans 619–655 (NINECHSQPCRHGGTCQDRDNSYLCLCLKGTTGPNCE). A glycan (O-linked (Glc...) serine) is linked at S625. T633 carries O-linked (Fuc...) threonine glycosylation. The EGF-like 16; calcium-binding domain occupies 657 to 692 (NLDDCASNPCDSGTCLDKIDGYECACEPGYTGSMCN). S663 is a glycosylation site (O-linked (Glc...) serine). The EGF-like 17; calcium-binding domain occupies 694–730 (NIDECAGSPCHNGGTCEDGIAGFTCRCPEGYHDPTCL). An O-linked (Fuc...) threonine glycan is attached at T708. Residues 732-767 (EVNECNSNPCIHGACRDGLNGYKCDCAPGWSGTNCD) form the EGF-like 18; calcium-binding domain. O-linked (Glc...) serine glycosylation occurs at S738. Positions 769-805 (NNNECESNPCVNGGTCKDMTSGYVCTCREGFSGPNCQ) constitute an EGF-like 19 domain. Residue S775 is glycosylated (O-linked (Glc...) serine). Residue T783 is glycosylated (O-linked (Fuc...) threonine). S800 is a glycosylation site (O-linked (GlcNAc) serine). Residues 807 to 843 (NINECASNPCLNQGTCIDDVAGYKCNCPLPYTGATCE) form the EGF-like 20; calcium-binding domain. O-linked (Glc...) serine glycosylation is present at S813. A glycan (O-linked (Fuc...) threonine) is linked at T821. The 39-residue stretch at 845–883 (VLAPCATSPCKNSGVCKESEDYESFSCVCPTGWQGQTCE) folds into the EGF-like 21 domain. An EGF-like 22; calcium-binding domain is found at 885 to 921 (DINECVKSPCRHGASCQNTNGSYRCLCQAGYTGRNCE). Residue N904 is glycosylated (N-linked (GlcNAc...) asparagine). O-linked (GlcNAc) threonine glycosylation is present at T916. Residues 923 to 959 (DIDDCRPNPCHNGGSCTDGINMAFCDCLPGFQGAFCE) form the EGF-like 23 domain. O-linked (Fuc) serine glycosylation occurs at S937. An EGF-like 24; calcium-binding domain is found at 961–997 (DINECASNPCRNGANCTDCVDSYTCTCPAGFNGIHCE). S967 carries O-linked (Glc...) serine glycosylation. Residue N975 is glycosylated (N-linked (GlcNAc...) asparagine). 5 EGF-like domains span residues 999 to 1035 (NTPD…SYCQ), 1037 to 1073 (DVNE…LNCQ), 1075 to 1111 (LVHW…FNCD), 1113 to 1159 (LSVS…SYCE), and 1161 to 1197 (EVDE…SNCS). T1013 carries O-linked (Fuc...) threonine glycosylation. S1043 carries an O-linked (Glc...) serine glycan. Residue T1051 is glycosylated (O-linked (Fuc...) threonine). Residue S1081 is glycosylated (O-linked (Glc...) serine). C1117 and C1138 are oxidised to a cystine. An O-linked (Fuc...) threonine glycan is attached at T1175. N-linked (GlcNAc...) asparagine glycosylation is present at N1195. Residues 1199 to 1235 (EINECLSQPCQNGGTCIDLTNTYKCSCPRGTQGVHCE) form the EGF-like 30; calcium-binding domain. O-linked (Glc...) serine glycosylation is present at S1205. An O-linked (Fuc...) threonine glycan is attached at T1213. In terms of domain architecture, EGF-like 31; calcium-binding spans 1237 to 1281 (NVDDCHPHLDPASRSPKCFNNGTCVDQVGGYSCTCPPGFVGERCE). A glycan (N-linked (GlcNAc...) asparagine) is linked at N1257. EGF-like domains follow at residues 1283-1321 (DINE…RRCE), 1323-1362 (VING…ATCE), 1364-1400 (DART…PECQ), and 1403-1442 (ASSP…LLCH). S1289 is a glycosylation site (O-linked (Glc...) serine). T1378 carries O-linked (Fuc...) threonine glycosylation. The O-linked (GlcNAc...) threonine glycan is linked to T1395. The O-linked (Fuc...) threonine; alternate glycan is linked to T1418. T1418 carries O-linked (GalNAc...) threonine; alternate glycosylation. 3 LNR repeats span residues 1465–1505 (CELP…PWKN), 1506–1547 (CTQS…CNPL), and 1548–1587 (YDQY…RLAA). 4 residues coordinate Ca(2+): D1473, N1476, D1491, and D1494. N1505 is a glycosylation site (N-linked (GlcNAc...) asparagine). N-linked (GlcNAc...) asparagine glycosylation is present at N1603. O-linked (GalNAc...) threonine glycosylation occurs at T1731. The interaction with PSEN1 stretch occupies residues 1734–1766 (PPLPSQLHLMYLAAAAFVLLFFVGCGVLLSRKR). Residues 1742 to 1762 (LMYLAAAAFVLLFFVGCGVLL) traverse the membrane as a helical segment. Over 1763-2527 (SRKRRRQHGQ…QITHIPEAFK (765 aa)) the chain is Cytoplasmic. K1765 is covalently cross-linked (Glycyl lysine isopeptide (Lys-Gly) (interchain with G-Cter in ubiquitin)). The tract at residues 1786-1814 (KKKRREPLGEDSVGLKPLKNASDGALMDD) is disordered. T1867 is modified (phosphothreonine). ANK repeat units lie at residues 1933–1962 (TGET…DANI), 1966–1996 (MGRT…DLDA), 2000–2029 (DGTT…DVNA), 2033–2062 (LGKS…NKDM), and 2066–2095 (KEET…NRDI). The tract at residues 1953–1961 (LLEASADAN) is HIF1AN-binding. Residue N1961 is modified to (3S)-3-hydroxyasparagine; by HIF1AN; partial. Positions 2020-2028 (LINSHADVN) are HIF1AN-binding. N2028 carries the (3S)-3-hydroxyasparagine; by HIF1AN modification. Disordered stretches follow at residues 2157–2201 (SATQ…DSSS), 2378–2424 (QPQN…SLPV), and 2436–2527 (PTSL…EAFK). The span at 2378–2391 (QPQNLQPPSQPHLS) shows a compositional bias: low complexity. Over residues 2436–2474 (PTSLPSSMVPPMTTTQFLTPPSQHSYSSSPVDNTPSHQL) the composition is skewed to polar residues. Positions 2484–2499 (PSPESPDQWSSSSPHS) are enriched in low complexity. The segment covering 2500–2520 (NISDWSEGISSPPTSMPSQIT) has biased composition (polar residues).

This sequence belongs to the NOTCH family. In terms of assembly, heterodimer of a C-terminal fragment N(TM) and an N-terminal fragment N(EC) which are probably linked by disulfide bonds. Interacts with DNER, DTX1, DTX2 and RBPJ/RBPSUH. Also interacts with MAML1, MAML2 and MAML3 which act as transcriptional coactivators for NOTCH1. Notch 1 intracellular domain interacts with SNW1; the interaction involves multimerized NOTCH1 NICD and is implicated in a formation of an intermediate preactivation complex which associates with DNA-bound CBF-1/RBPJ. The activated membrane-bound form interacts with AAK1 which promotes NOTCH1 stabilization. Forms a trimeric complex with FBXW7 and SGK1. Interacts with HIF1AN. HIF1AN negatively regulates the function of notch intracellular domain (NICD), accelerating myogenic differentiation. Interacts (via NICD) with SNAI1 (via zinc fingers); the interaction induces SNAI1 degradation via MDM2-mediated ubiquitination and inhibits SNAI1-induced cell invasion. Interacts (via NICD) with MDM2A. Interacts (via NICD) with BCL6; the interaction decreases MAML1 recruitment by NOTCH1 NICD on target genes DNA and inhibits NOTCH1 transactivation activity. Interacts with THBS4. Interacts (via the EGF-like repeat region) with CCN3 (via CTCK domain). Interacts (via EGF-like domains) with DLL4 (via N-terminal DSL and MNNL domains). Interacts with ZMIZ1. Interacts (via NICD domain) with MEGF10 (via the cytoplasmic domain). Interacts with DLL1 and JAG1. Interacts (via NICD domain) with PRAG1. Forms a complex with PRAG1, N1ICD and MAML1, in a MAML1-dependent manner. Interacts (via transmembrane region) with PSEN1; the interaction is direct. Interacts with ZFP64. Post-translationally, synthesized in the endoplasmic reticulum as an inactive form which is proteolytically cleaved by a furin-like convertase in the trans-Golgi network before it reaches the plasma membrane to yield an active, ligand-accessible form. Cleavage results in a C-terminal fragment N(TM) and a N-terminal fragment N(EC). Following ligand binding, it is cleaved by ADAM17 to yield a membrane-associated intermediate fragment called notch extracellular truncation (NEXT). Following endocytosis, this fragment is then cleaved by one of the catalytic subunits of gamma-secretase (PSEN1 or PSEN2) to release a Notch-derived peptide containing the intracellular domain (NICD) from the membrane. In terms of processing, phosphorylated. O-linked glycosylation by GALNT11 is involved in determination of left/right symmetry: glycosylation promotes activation of NOTCH1, possibly by promoting cleavage by ADAM17, modulating the balance between motile and immotile (sensory) cilia at the left-right organiser (LRO). O-glycosylated on the EGF-like domains. O-glucosylated at Ser-451 by KDELC1 and KDELC2. Contains both O-linked fucose and O-linked glucose in the EGF-like domains 11, 12 and 13, which are interacting with the residues on DLL4. MFNG-, RFNG- and LFNG-mediated modification of O-fucose residues at specific EGF-like domains results in inhibition of its activation by JAG1 and enhancement of its activation by DLL1 via an increased binding to DLL1. Post-translationally, ubiquitinated. Undergoes 'Lys-29'-linked polyubiquitination by ITCH; promotes the lysosomal degradation of non-activated internalized NOTCH1. Deubiquitination by USP12 is required for transport of internalized non-activated receptor from late endosomes to lysosomes for degradation. Monoubiquitination at Lys-1765 is required for activation by gamma-secretase cleavage, it promotes interaction with AAK1, which stabilizes it. Deubiquitination by EIF3F is necessary for nuclear import of activated Notch. In terms of processing, hydroxylated at Asn-1961 by HIF1AN. Hydroxylated at Asn-2028 by HIF1AN. Hydroxylation reduces affinity for HI1AN and may thus indirectly modulate negative regulation of NICD.

The protein localises to the cell membrane. The protein resides in the late endosome membrane. Its subcellular location is the nucleus. Functions as a receptor for membrane-bound ligands Jagged-1 (JAG1), Jagged-2 (JAG2) and Delta-1 (DLL1) to regulate cell-fate determination. Upon ligand activation through the released notch intracellular domain (NICD) it forms a transcriptional activator complex with RBPJ/RBPSUH and activates genes of the enhancer of split locus. Affects the implementation of differentiation, proliferation and apoptotic programs. Involved in angiogenesis; negatively regulates endothelial cell proliferation and migration and angiogenic sprouting. Involved in the maturation of both CD4(+) and CD8(+) cells in the thymus. Important for follicular differentiation and possibly cell fate selection within the follicle. During cerebellar development, functions as a receptor for neuronal DNER and is involved in the differentiation of Bergmann glia. Represses neuronal and myogenic differentiation. May play an essential role in postimplantation development, probably in some aspect of cell specification and/or differentiation. May be involved in mesoderm development, somite formation and neurogenesis. May enhance HIF1A function by sequestering HIF1AN away from HIF1A. Required for the THBS4 function in regulating protective astrogenesis from the subventricular zone (SVZ) niche after injury. Involved in determination of left/right symmetry by modulating the balance between motile and immotile (sensory) cilia at the left-right organiser (LRO). This Cricetulus griseus (Chinese hamster) protein is Neurogenic locus notch homolog protein 1 (NOTCH1).